Reading from the N-terminus, the 632-residue chain is Myrcene synthase TPS3FN, chloroplastic (632 aa).

The transit peptide at 1–55 directs the protein to the chloroplast; it reads MHCMAVHQFSPSIVSSLPTISTYNNNHFCRFFTPKTSISPISKTKSKSSTCYPIQ. (2E)-geranyl diphosphate is bound by residues arginine 343, aspartate 380, aspartate 384, arginine 524, and aspartate 527. Aspartate 380 and aspartate 384 together coordinate Mg(2+). The DDXXD motif signature appears at 380–384; it reads DDIYD. Residues aspartate 527, threonine 531, and glutamate 535 each coordinate Mg(2+).

This sequence belongs to the terpene synthase family. Tpsb subfamily. Requires Mg(2+) as cofactor. Mn(2+) is required as a cofactor. Expressed in glandular trichomes two to four weeks after flowering onset.

Its subcellular location is the plastid. It is found in the chloroplast. The enzyme catalyses (2E)-geranyl diphosphate = beta-myrcene + diphosphate. It participates in secondary metabolite biosynthesis; terpenoid biosynthesis. Involved in monoterpene (C10) olefins biosynthesis, constituants of cannabinoids and terpenoids-rich resins. Catalyzes strictly the conversion of (2E)-geranyl diphosphate to beta-myrcene. The sequence is that of Myrcene synthase TPS3FN, chloroplastic from Cannabis sativa (Hemp).